Reading from the N-terminus, the 143-residue chain is UPF0651 protein P31B10.02, mitochondrial (143 aa).

The region spanning 48–93 (IYDGIRVPPKPEEPLNCCQSGCAICVWDVYADDLEEYNRARRKAKR) is the Oxidoreductase-like domain.

Belongs to the UPF0651 family.

Its subcellular location is the mitochondrion. In Schizosaccharomyces pombe (strain 972 / ATCC 24843) (Fission yeast), this protein is UPF0651 protein P31B10.02, mitochondrial.